The primary structure comprises 419 residues: Transcription termination factor Rho (419 aa).

Residues D48 to K123 form the Rho RNA-BD domain. RNA-binding regions lie at residues G61–R66, D78–Y80, and E108–Y110. ATP is bound by residues G169–G174, K181–I186, and R212. An RNA-binding 2 region spans residues V284–G288.

The protein belongs to the Rho family. As to quaternary structure, homohexamer. The homohexamer assembles into an open ring structure.

In terms of biological role, facilitates transcription termination by a mechanism that involves Rho binding to the nascent RNA, activation of Rho's RNA-dependent ATPase activity, and release of the mRNA from the DNA template. The protein is Transcription termination factor Rho of Buchnera aphidicola subsp. Schizaphis graminum (strain Sg).